A 620-amino-acid polypeptide reads, in one-letter code: E3 ubiquitin-protein ligase DTX1 (620 aa).

2 WWE domains span residues 14–94 and 95–171; these read GLGF…PVRR and NFYD…RLRR. 3 disordered regions span residues 221-248, 262-313, and 361-391; these read SQRRKAPPAPPLPPPPPPGGPPGALAVR, PAAG…SIPP, and PPVSKSDVKPVPGVPGVCRKTKKKHLKKSKN. Composition is skewed to pro residues over residues 227 to 241 and 268 to 280; these read PPAPPLPPPPPPGGP and EPAPPPGAPPRSP. Positions 230–233 match the SH3-binding motif; the sequence is PPLP. The span at 291–307 shows a compositional bias: polar residues; the sequence is QNNLNRPGPQRTTSVSA. Positions 379–389 are enriched in basic residues; sequence RKTKKKHLKKS. Residues 411 to 472 form an RING-type zinc finger; it reads CTICMERLVT…DGSLQCPTCK (62 aa).

This sequence belongs to the Deltex family. In terms of assembly, homodimer. May form a heterodimer with other members of the Deltex family. Interacts with NOTCH1 via its N-terminal region and EIF3F, the interaction is required for NOTCH1 deubiquitination. Interacts with EP300. Forms a heterodimer with BBAP; the heterodimerization leading to an increase of in vitro ubiquitin ligase activity. Interacts with ITCH. Post-translationally, ubiquitinated; undergoes 'Lys-29'-linked polyubiquitination catalyzed by ITCH. Widely expressed. Strongly expressed in blood vessel. Also expressed in embryonic nervous system, pancreas, lung, adrenal gland, digestive tube and muscles. Expressed in MZB cells and developing B- and T-cells.

It is found in the cytoplasm. It localises to the nucleus. The catalysed reaction is S-ubiquitinyl-[E2 ubiquitin-conjugating enzyme]-L-cysteine + [acceptor protein]-L-lysine = [E2 ubiquitin-conjugating enzyme]-L-cysteine + N(6)-ubiquitinyl-[acceptor protein]-L-lysine.. Its pathway is protein modification; protein ubiquitination. In terms of biological role, functions as a ubiquitin ligase protein in vivo, mediating ubiquitination and promoting degradation of MEKK1, suggesting that it may regulate the Notch pathway via some ubiquitin ligase activity. Regulator of Notch signaling, a signaling pathway involved in cell-cell communications that regulates a broad spectrum of cell-fate determinations. Mainly acts as a positive regulator of Notch, but it also acts as a negative regulator, depending on the developmental and cell context. Mediates the antineural activity of Notch, possibly by inhibiting the transcriptional activation mediated by MATCH1. Involved in neurogenesis, lymphogenesis and myogenesis, and may also be involved in MZB (Marginal zone B) cell differentiation. Promotes B-cell development at the expense of T-cell development, suggesting that it can antagonize NOTCH1. In Homo sapiens (Human), this protein is E3 ubiquitin-protein ligase DTX1 (DTX1).